Consider the following 225-residue polypeptide: Cytochrome c oxidase subunit 2 (225 aa).

At 1–25 (MSTWFMFMFQESNSYYADNLISFHN) the chain is on the mitochondrial intermembrane side. Residues 26-47 (MVMMIIIMISTLTVYIILDLFM) form a helical membrane-spanning segment. Over 48–62 (NKFSNLFLLKNHNIE) the chain is Mitochondrial matrix. A helical membrane pass occupies residues 63–82 (IIWTIIPIIILLIICFPSLK). The Mitochondrial intermembrane portion of the chain corresponds to 83–225 (ILYLIDEIVN…YFLNWVNKQI (143 aa)). Residues histidine 159, cysteine 194, glutamate 196, cysteine 198, histidine 202, and methionine 205 each coordinate Cu cation. Glutamate 196 contributes to the Mg(2+) binding site.

The protein belongs to the cytochrome c oxidase subunit 2 family. Component of the cytochrome c oxidase (complex IV, CIV), a multisubunit enzyme composed of a catalytic core of 3 subunits and several supernumerary subunits. The complex exists as a monomer or a dimer and forms supercomplexes (SCs) in the inner mitochondrial membrane with ubiquinol-cytochrome c oxidoreductase (cytochrome b-c1 complex, complex III, CIII). The cofactor is Cu cation.

The protein resides in the mitochondrion inner membrane. The enzyme catalyses 4 Fe(II)-[cytochrome c] + O2 + 8 H(+)(in) = 4 Fe(III)-[cytochrome c] + 2 H2O + 4 H(+)(out). Its function is as follows. Component of the cytochrome c oxidase, the last enzyme in the mitochondrial electron transport chain which drives oxidative phosphorylation. The respiratory chain contains 3 multisubunit complexes succinate dehydrogenase (complex II, CII), ubiquinol-cytochrome c oxidoreductase (cytochrome b-c1 complex, complex III, CIII) and cytochrome c oxidase (complex IV, CIV), that cooperate to transfer electrons derived from NADH and succinate to molecular oxygen, creating an electrochemical gradient over the inner membrane that drives transmembrane transport and the ATP synthase. Cytochrome c oxidase is the component of the respiratory chain that catalyzes the reduction of oxygen to water. Electrons originating from reduced cytochrome c in the intermembrane space (IMS) are transferred via the dinuclear copper A center (CU(A)) of subunit 2 and heme A of subunit 1 to the active site in subunit 1, a binuclear center (BNC) formed by heme A3 and copper B (CU(B)). The BNC reduces molecular oxygen to 2 water molecules using 4 electrons from cytochrome c in the IMS and 4 protons from the mitochondrial matrix. The chain is Cytochrome c oxidase subunit 2 (COII) from Apis mellifera ligustica (Common honeybee).